We begin with the raw amino-acid sequence, 244 residues long: tRNA pseudouridine synthase A (244 aa).

The Nucleophile role is filled by Asp-52. Position 111 (Tyr-111) interacts with substrate.

The protein belongs to the tRNA pseudouridine synthase TruA family. Homodimer.

The enzyme catalyses uridine(38/39/40) in tRNA = pseudouridine(38/39/40) in tRNA. Formation of pseudouridine at positions 38, 39 and 40 in the anticodon stem and loop of transfer RNAs. In Thermosipho africanus (strain TCF52B), this protein is tRNA pseudouridine synthase A.